A 162-amino-acid chain; its full sequence is NADH-quinone oxidoreductase subunit I (162 aa).

2 4Fe-4S ferredoxin-type domains span residues 52 to 82 and 93 to 122; these read LRRY…IEAG and TRYD…EGPN. 8 residues coordinate [4Fe-4S] cluster: Cys62, Cys65, Cys68, Cys72, Cys102, Cys105, Cys108, and Cys112.

Belongs to the complex I 23 kDa subunit family. In terms of assembly, NDH-1 is composed of 14 different subunits. Subunits NuoA, H, J, K, L, M, N constitute the membrane sector of the complex. Requires [4Fe-4S] cluster as cofactor.

The protein localises to the cell inner membrane. The enzyme catalyses a quinone + NADH + 5 H(+)(in) = a quinol + NAD(+) + 4 H(+)(out). Functionally, NDH-1 shuttles electrons from NADH, via FMN and iron-sulfur (Fe-S) centers, to quinones in the respiratory chain. The immediate electron acceptor for the enzyme in this species is believed to be ubiquinone. Couples the redox reaction to proton translocation (for every two electrons transferred, four hydrogen ions are translocated across the cytoplasmic membrane), and thus conserves the redox energy in a proton gradient. The polypeptide is NADH-quinone oxidoreductase subunit I (Methylobacterium radiotolerans (strain ATCC 27329 / DSM 1819 / JCM 2831 / NBRC 15690 / NCIMB 10815 / 0-1)).